We begin with the raw amino-acid sequence, 310 residues long: tRNA dimethylallyltransferase (310 aa).

ATP is bound at residue 14–21; that stretch reads GPTASGKT. 16 to 21 lines the substrate pocket; it reads TASGKT. Interaction with substrate tRNA stretches follow at residues 39-42, 163-167, and 244-249; these read DSAL, QRLSR, and RCVGYR.

The protein belongs to the IPP transferase family. In terms of assembly, monomer. Requires Mg(2+) as cofactor.

It catalyses the reaction adenosine(37) in tRNA + dimethylallyl diphosphate = N(6)-dimethylallyladenosine(37) in tRNA + diphosphate. In terms of biological role, catalyzes the transfer of a dimethylallyl group onto the adenine at position 37 in tRNAs that read codons beginning with uridine, leading to the formation of N6-(dimethylallyl)adenosine (i(6)A). The sequence is that of tRNA dimethylallyltransferase from Tolumonas auensis (strain DSM 9187 / NBRC 110442 / TA 4).